The chain runs to 370 residues: Muconate cycloisomerase 1 (370 aa).

The active site involves Lys-166. Residues Asp-195, Glu-221, and Asp-246 each contribute to the Mn(2+) site.

The protein belongs to the mandelate racemase/muconate lactonizing enzyme family. Homooctamer. It depends on Mn(2+) as a cofactor.

The enzyme catalyses (S)-muconolactone = cis,cis-muconate + H(+). It functions in the pathway aromatic compound metabolism; beta-ketoadipate pathway; 5-oxo-4,5-dihydro-2-furylacetate from catechol: step 2/3. In terms of biological role, catalyzes a syn cycloisomerization. This is Muconate cycloisomerase 1 (catB) from Acinetobacter baylyi (strain ATCC 33305 / BD413 / ADP1).